The primary structure comprises 92 residues: MKLCVSAFSLLLLVAAFCDSVLSAPIGSDPPTSCCFSYTSRKIHRNFVMDYYETSSLCSQPAVVFLTKKGRQICADPSEPWVNEYVNDLELN.

The N-terminal stretch at Met1–Ser23 is a signal peptide. Intrachain disulfides connect Cys34/Cys58 and Cys35/Cys74.

This sequence belongs to the intercrine beta (chemokine CC) family. Homodimer.

The protein resides in the secreted. Its function is as follows. Monokine with inflammatory and chemokinetic properties. The protein is C-C motif chemokine 4 (Ccl4) of Rattus norvegicus (Rat).